A 350-amino-acid polypeptide reads, in one-letter code: Biotin synthase (350 aa).

The Radical SAM core domain maps to R54–S278. Residues C69, C73, and C76 each coordinate [4Fe-4S] cluster. [2Fe-2S] cluster-binding residues include C113, C144, C204, and R276.

The protein belongs to the radical SAM superfamily. Biotin synthase family. In terms of assembly, homodimer. Requires [4Fe-4S] cluster as cofactor. It depends on [2Fe-2S] cluster as a cofactor.

It carries out the reaction (4R,5S)-dethiobiotin + (sulfur carrier)-SH + 2 reduced [2Fe-2S]-[ferredoxin] + 2 S-adenosyl-L-methionine = (sulfur carrier)-H + biotin + 2 5'-deoxyadenosine + 2 L-methionine + 2 oxidized [2Fe-2S]-[ferredoxin]. It participates in cofactor biosynthesis; biotin biosynthesis; biotin from 7,8-diaminononanoate: step 2/2. Catalyzes the conversion of dethiobiotin (DTB) to biotin by the insertion of a sulfur atom into dethiobiotin via a radical-based mechanism. This Neisseria meningitidis serogroup A / serotype 4A (strain DSM 15465 / Z2491) protein is Biotin synthase.